The primary structure comprises 74 residues: RNA-binding protein Hfq (74 aa).

One can recognise a Sm domain in the interval 9–69 (DQYLNQLRKN…ISTFSPVKNV (61 aa)).

This sequence belongs to the Hfq family. As to quaternary structure, homohexamer.

Functionally, RNA chaperone that binds small regulatory RNA (sRNAs) and mRNAs to facilitate mRNA translational regulation in response to envelope stress, environmental stress and changes in metabolite concentrations. Also binds with high specificity to tRNAs. The sequence is that of RNA-binding protein Hfq from Oceanobacillus iheyensis (strain DSM 14371 / CIP 107618 / JCM 11309 / KCTC 3954 / HTE831).